We begin with the raw amino-acid sequence, 491 residues long: uncharacterized protein (491 aa).

Gly-267 to Ser-274 lines the ATP pocket.

It belongs to the AAA ATPase family. Highly divergent.

It is found in the plastid. The protein localises to the chloroplast. This is an uncharacterized protein from Gracilaria tenuistipitata var. liui (Red alga).